We begin with the raw amino-acid sequence, 293 residues long: uncharacterized protein (293 aa).

An HTH lysR-type domain is found at 1–60 (MHITLRQLEVFAEVLKSGSTTQASVMLALSQSAVSAALTDLEGQLGVQLFDRVGKRLVVN). Positions 20–39 (TTQASVMLALSQSAVSAALT) form a DNA-binding region, H-T-H motif.

This sequence belongs to the LysR transcriptional regulatory family.

This is an uncharacterized protein from Escherichia coli O157:H7.